Consider the following 182-residue polypeptide: Nascent polypeptide-associated complex subunit alpha (182 aa).

The 65-residue stretch at 17 to 81 (NKNEKKAKEL…AKVDDMNQRI (65 aa)) folds into the NAC-A/B domain. The segment at 120–148 (ASLQGGESNADAAEDDNEEVDETGINPKD) is disordered. The segment covering 131–141 (AAEDDNEEVDE) has biased composition (acidic residues). A UBA domain is found at 144-182 (INPKDIDLIVEQTRVSRGSAVKALKKHDGDMVNALMELS).

Belongs to the NAC-alpha family. Part of the nascent polypeptide-associated complex (NAC), consisting of EGD2 and EGD1. NAC associates with ribosomes via EGD1.

The protein resides in the cytoplasm. It is found in the nucleus. Its function is as follows. Component of the nascent polypeptide-associated complex (NAC), a dynamic component of the ribosomal exit tunnel, protecting the emerging polypeptides from interaction with other cytoplasmic proteins to ensure appropriate nascent protein targeting. The NAC complex also promotes mitochondrial protein import by enhancing productive ribosome interactions with the outer mitochondrial membrane and blocks the inappropriate interaction of ribosomes translating non-secretory nascent polypeptides with translocation sites in the membrane of the endoplasmic reticulum. EGD2 may also be involved in transcription regulation. The polypeptide is Nascent polypeptide-associated complex subunit alpha (EGD2) (Lodderomyces elongisporus (strain ATCC 11503 / CBS 2605 / JCM 1781 / NBRC 1676 / NRRL YB-4239) (Yeast)).